The sequence spans 274 residues: Serine acetyltransferase (274 aa).

This sequence belongs to the transferase hexapeptide repeat family.

It is found in the cytoplasm. The enzyme catalyses L-serine + acetyl-CoA = O-acetyl-L-serine + CoA. It functions in the pathway amino-acid biosynthesis; L-cysteine biosynthesis; L-cysteine from L-serine: step 1/2. This Buchnera aphidicola subsp. Acyrthosiphon pisum (strain APS) (Acyrthosiphon pisum symbiotic bacterium) protein is Serine acetyltransferase (cysE).